The sequence spans 387 residues: Small ribosomal subunit protein mS31 (387 aa).

A mitochondrion-targeting transit peptide spans 1–56; the sequence is MLHRIPAFIRPRPFSGLPLSCGNREVSVAASVLPAAGSGAVRTENTIQRHFCTSRS. Disordered regions lie at residues 59–83 and 203–228; these read SKKD…GEGK and KSPS…SSLS. Composition is skewed to polar residues over residues 66 to 76 and 207 to 217; these read VPANETSQKAA and MRVSSRPQHQI.

It belongs to the mitochondrion-specific ribosomal protein mS31 family. In terms of assembly, component of the mitochondrial ribosome small subunit (28S) which comprises a 12S rRNA and about 30 distinct proteins.

The protein localises to the mitochondrion. In Rattus norvegicus (Rat), this protein is Small ribosomal subunit protein mS31 (Mrps31).